The sequence spans 348 residues: Aminotransferase atnJ (348 aa).

Arg79 is a binding site for pyridoxal 5'-phosphate. Residue Lys180 is modified to N6-(pyridoxal phosphate)lysine. Glu216 is a binding site for pyridoxal 5'-phosphate.

The protein belongs to the class-IV pyridoxal-phosphate-dependent aminotransferase family. Pyridoxal 5'-phosphate serves as cofactor.

It functions in the pathway secondary metabolite biosynthesis. Functionally, aminotransferase; part of the gene cluster that mediates the biosynthesis of aspercryptins, linear lipopeptides built from six amino acids including 2 highly unusual and nonproteogenic amino acids, 2-amino-octanoic acid (2aoa) and 2-amino-dodecanol (2adol). The core structure of aspercryptins is as follows: Ser/Ala-Thr-Ile/Val-2aoa-Asn-2adol. The first step of aspercryptin biosynthesis is the generation of the fatty acid precursors, octanoic and dodecanoic acids, by the FAS subunits atnF and atnM. The fatty acid precursors are likely transformed into the corresponding alpha-amino fatty acids in three steps. First, they are hydroxylated by the cytochrome P450 monooxygenase atnE, then oxidized to the corresponding alpha-keto acids by the NAD(P)-dependent oxidoreductase atnD, and finally converted to the alpha-amino fatty acids by the PLP-dependent aminotransferases atnH or atnJ. the alpha-amino fatty acids, 2-amino-octanoic and 2-amino-dodecanoic acids, are recognized, activated, and covalently tethered to the NRPS atnA by its fourth and sixth adenylation domains. The second module of atnA is the Thr module and contains an epimerase (E) domain responsible for the epimerization of Thr to D-allo-Thr. Additionally, despite atnA having only one epimerase domain, the first amino acid of aspercryptin A1 is D-Ser, suggesting that serine is either loaded directly as D-Ser on the first module or that the epimerase domain in the threonine module epimerizes both L-Ser and L-Thr. After condensation of the hexapeptide of aspercryptin, the C-terminal reductase (TE) domain might be involved in the reductive release and production of the aldehyde hexapeptide. Further reduction would generate aspercryptins. The variety of aspercryptins produced reflects the flexibility of the atnA NRPS, allowing incorporation of alanine instead of serine, valine for isoleucine, and a C10 fatty amino alcohol instead of the C12 version. AtnB seems to be involved in the selectivity for Ile versus Val by the third module. Moreover, type B, C and D aspercryptins have an additional N-terminal cichorine, acetyl and propionyl group respectively. The sequence is that of Aminotransferase atnJ from Emericella nidulans (strain FGSC A4 / ATCC 38163 / CBS 112.46 / NRRL 194 / M139) (Aspergillus nidulans).